Reading from the N-terminus, the 376-residue chain is Actin, macronuclear (376 aa).

It belongs to the actin family.

The protein resides in the cytoplasm. It localises to the cytoskeleton. It catalyses the reaction ATP + H2O = ADP + phosphate + H(+). Functionally, actins are highly conserved proteins that are involved in various types of cell motility and are ubiquitously expressed in all eukaryotic cells. The polypeptide is Actin, macronuclear (Tetrahymena thermophila).